Reading from the N-terminus, the 245-residue chain is tRNA (guanine-N(1)-)-methyltransferase (245 aa).

Residues Gly-114 and 133–138 (LGDFVI) each bind S-adenosyl-L-methionine.

This sequence belongs to the RNA methyltransferase TrmD family. As to quaternary structure, homodimer.

The protein localises to the cytoplasm. It catalyses the reaction guanosine(37) in tRNA + S-adenosyl-L-methionine = N(1)-methylguanosine(37) in tRNA + S-adenosyl-L-homocysteine + H(+). Its function is as follows. Specifically methylates guanosine-37 in various tRNAs. This Pediococcus pentosaceus (strain ATCC 25745 / CCUG 21536 / LMG 10740 / 183-1w) protein is tRNA (guanine-N(1)-)-methyltransferase.